The chain runs to 294 residues: Eukaryotic translation initiation factor 3 subunit F (294 aa).

One can recognise an MPN domain in the interval 7-155 (VNVHPGVYMN…VRAYLRSKAG (149 aa)).

It belongs to the eIF-3 subunit F family. In terms of assembly, component of the eukaryotic translation initiation factor 3 (eIF-3) complex.

The protein localises to the cytoplasm. In terms of biological role, component of the eukaryotic translation initiation factor 3 (eIF-3) complex, which is involved in protein synthesis of a specialized repertoire of mRNAs and, together with other initiation factors, stimulates binding of mRNA and methionyl-tRNAi to the 40S ribosome. The eIF-3 complex specifically targets and initiates translation of a subset of mRNAs involved in cell proliferation. This is Eukaryotic translation initiation factor 3 subunit F from Caenorhabditis elegans.